Here is a 409-residue protein sequence, read N- to C-terminus: DNA replication and repair protein RecF (409 aa).

Gly-30–Thr-37 contacts ATP.

This sequence belongs to the RecF family.

Its subcellular location is the cytoplasm. The RecF protein is involved in DNA metabolism; it is required for DNA replication and normal SOS inducibility. RecF binds preferentially to single-stranded, linear DNA. It also seems to bind ATP. This Rhodococcus erythropolis (strain PR4 / NBRC 100887) protein is DNA replication and repair protein RecF.